Here is a 380-residue protein sequence, read N- to C-terminus: Glucose-1-phosphate adenylyltransferase (380 aa).

Alpha-D-glucose 1-phosphate contacts are provided by residues G164, 179–180 (EK), and S190.

It belongs to the bacterial/plant glucose-1-phosphate adenylyltransferase family. As to quaternary structure, homotetramer.

The catalysed reaction is alpha-D-glucose 1-phosphate + ATP + H(+) = ADP-alpha-D-glucose + diphosphate. Its pathway is glycan biosynthesis; glycogen biosynthesis. Involved in the biosynthesis of ADP-glucose, a building block required for the elongation reactions to produce glycogen. Catalyzes the reaction between ATP and alpha-D-glucose 1-phosphate (G1P) to produce pyrophosphate and ADP-Glc. The protein is Glucose-1-phosphate adenylyltransferase of Lactococcus lactis subsp. cremoris (strain SK11).